Here is a 569-residue protein sequence, read N- to C-terminus: Dihydroorotate dehydrogenase (quinone), mitochondrial (569 aa).

Residues 1 to 23 (MISKLKPQFMFLPKKHILSYCRK) constitute a mitochondrion transit peptide. A helical membrane pass occupies residues 143-163 (IIFLLFVSLFGLYGFFESYNP). Residues 225–229 (AGFDK) and Thr-249 each bind FMN. Lys-229 is a binding site for substrate. Residues 274-278 (NSCGF) and Asn-342 contribute to the substrate site. Asn-342 is an FMN binding site. Ser-345 (nucleophile) is an active-site residue. Asn-347 provides a ligand contact to substrate. Residue Lys-429 coordinates FMN. Position 458 to 459 (458 to 459 (NT)) interacts with substrate. Residues 477–478 (SG), 505–507 (SGG), and 528–529 (YS) contribute to the FMN site.

Belongs to the dihydroorotate dehydrogenase family. Type 2 subfamily. As to quaternary structure, monomer. The cofactor is FMN.

The protein localises to the mitochondrion inner membrane. It catalyses the reaction (S)-dihydroorotate + a quinone = orotate + a quinol. Its pathway is pyrimidine metabolism; UMP biosynthesis via de novo pathway; orotate from (S)-dihydroorotate (quinone route): step 1/1. Catalyzes the conversion of dihydroorotate to orotate with quinone as electron acceptor. The chain is Dihydroorotate dehydrogenase (quinone), mitochondrial from Plasmodium falciparum (isolate 3D7).